The sequence spans 942 residues: Isoleucine--tRNA ligase (942 aa).

The 'HIGH' region signature appears at 58-68 (PYVNGSIHLGH). Position 564 (glutamate 564) interacts with L-isoleucyl-5'-AMP. The short motif at 605-609 (KMSKS) is the 'KMSKS' region element. Residue lysine 608 participates in ATP binding. Zn(2+)-binding residues include cysteine 905, cysteine 908, cysteine 925, and cysteine 928.

The protein belongs to the class-I aminoacyl-tRNA synthetase family. IleS type 1 subfamily. Monomer. Zn(2+) is required as a cofactor.

It is found in the cytoplasm. It catalyses the reaction tRNA(Ile) + L-isoleucine + ATP = L-isoleucyl-tRNA(Ile) + AMP + diphosphate. Functionally, catalyzes the attachment of isoleucine to tRNA(Ile). As IleRS can inadvertently accommodate and process structurally similar amino acids such as valine, to avoid such errors it has two additional distinct tRNA(Ile)-dependent editing activities. One activity is designated as 'pretransfer' editing and involves the hydrolysis of activated Val-AMP. The other activity is designated 'posttransfer' editing and involves deacylation of mischarged Val-tRNA(Ile). The sequence is that of Isoleucine--tRNA ligase from Blochmanniella pennsylvanica (strain BPEN).